The following is a 291-amino-acid chain: Deaminated glutathione amidase (291 aa).

Residues 13-268 (KRIGLGQITS…NDIAFVDIDL (256 aa)) form the CN hydrolase domain. Catalysis depends on Glu-52, which acts as the Proton acceptor. Lys-130 functions as the Proton donor in the catalytic mechanism. The active-site Nucleophile is Cys-172.

Belongs to the carbon-nitrogen hydrolase superfamily. NIT1/NIT2 family.

It catalyses the reaction N-(4-oxoglutaryl)-L-cysteinylglycine + H2O = L-cysteinylglycine + 2-oxoglutarate. Functionally, catalyzes the hydrolysis of the amide bond in N-(4-oxoglutarate)-L-cysteinylglycine (deaminated glutathione), a metabolite repair reaction to dispose of the harmful deaminated glutathione. This chain is Deaminated glutathione amidase (nit1-1), found in Dictyostelium discoideum (Social amoeba).